The sequence spans 133 residues: Ribonuclease P protein component (133 aa).

The protein belongs to the RnpA family. As to quaternary structure, consists of a catalytic RNA component (M1 or rnpB) and a protein subunit.

The catalysed reaction is Endonucleolytic cleavage of RNA, removing 5'-extranucleotides from tRNA precursor.. Its function is as follows. RNaseP catalyzes the removal of the 5'-leader sequence from pre-tRNA to produce the mature 5'-terminus. It can also cleave other RNA substrates such as 4.5S RNA. The protein component plays an auxiliary but essential role in vivo by binding to the 5'-leader sequence and broadening the substrate specificity of the ribozyme. This chain is Ribonuclease P protein component, found in Pseudomonas entomophila (strain L48).